The following is a 509-amino-acid chain: MDIRAAEISAILKEQIKNFGKEAEVSEVGQVLSVGDGIARVYGLDNVQAGEMVEFPGGIRGMALNLESDNVGVVIFGADRDIKEGDVVKRTGAIVDVPVGPELLGRVVDALGNPIDGKGPIKAKERRRVDVKAPGIIPRKSVHEPMSTGLKAIDALIPVGRGQRELVIGDRQTGKTAIILDTFLNQKPIHDNGPDKDKLYCVYVAVGQKRSTVAQFVKVLEERGALEYSIVVAATASDPAPMQYLAPFAGCAMGEYFRDNGQHALIGYDDLSKQAVAYRQMSLLLRRPPGREAYPGDVFYLHSRLLERAAKLNDENGAGSLTALPVIETQGNDVSAFIPTNVISITDGQIFLETNLFYQGIRPAVNVGLSVSRVGSSAQIKAMKQVAGSIKGELAQYREMAAFAQFGSDLDAATQRLLNRGARLTELLKQPQFSPLKTEEQVAVIYAGVNGYLDKLAVNQVGKFEEGLLASLRTEHKDVLEGIRNEKALTDDLKAKLKAAIDAFAKSFV.

Residue 169 to 176 (GDRQTGKT) participates in ATP binding.

Belongs to the ATPase alpha/beta chains family. In terms of assembly, F-type ATPases have 2 components, CF(1) - the catalytic core - and CF(0) - the membrane proton channel. CF(1) has five subunits: alpha(3), beta(3), gamma(1), delta(1), epsilon(1). CF(0) has three main subunits: a(1), b(2) and c(9-12). The alpha and beta chains form an alternating ring which encloses part of the gamma chain. CF(1) is attached to CF(0) by a central stalk formed by the gamma and epsilon chains, while a peripheral stalk is formed by the delta and b chains.

The protein resides in the cell inner membrane. The catalysed reaction is ATP + H2O + 4 H(+)(in) = ADP + phosphate + 5 H(+)(out). Functionally, produces ATP from ADP in the presence of a proton gradient across the membrane. The alpha chain is a regulatory subunit. In Brucella abortus (strain S19), this protein is ATP synthase subunit alpha.